The sequence spans 274 residues: Dermonecrotic toxin SdSicTox-betaIIB1bx (274 aa).

The active site involves H5. The Mg(2+) site is built by E25 and D27. The active-site Nucleophile is the H41. 2 disulfides stabilise this stretch: C45/C51 and C47/C190. D85 is a Mg(2+) binding site.

It belongs to the arthropod phospholipase D family. Class II subfamily. It depends on Mg(2+) as a cofactor. Expressed by the venom gland.

It is found in the secreted. It catalyses the reaction an N-(acyl)-sphingosylphosphocholine = an N-(acyl)-sphingosyl-1,3-cyclic phosphate + choline. The enzyme catalyses an N-(acyl)-sphingosylphosphoethanolamine = an N-(acyl)-sphingosyl-1,3-cyclic phosphate + ethanolamine. It carries out the reaction a 1-acyl-sn-glycero-3-phosphocholine = a 1-acyl-sn-glycero-2,3-cyclic phosphate + choline. The catalysed reaction is a 1-acyl-sn-glycero-3-phosphoethanolamine = a 1-acyl-sn-glycero-2,3-cyclic phosphate + ethanolamine. Dermonecrotic toxins cleave the phosphodiester linkage between the phosphate and headgroup of certain phospholipids (sphingolipid and lysolipid substrates), forming an alcohol (often choline) and a cyclic phosphate. This toxin acts on sphingomyelin (SM). It may also act on ceramide phosphoethanolamine (CPE), lysophosphatidylcholine (LPC) and lysophosphatidylethanolamine (LPE), but not on lysophosphatidylserine (LPS), and lysophosphatidylglycerol (LPG). It acts by transphosphatidylation, releasing exclusively cyclic phosphate products as second products. Induces dermonecrosis, hemolysis, increased vascular permeability, edema, inflammatory response, and platelet aggregation. The chain is Dermonecrotic toxin SdSicTox-betaIIB1bx from Sicarius cf. damarensis (strain GJB-2008) (Six-eyed sand spider).